The sequence spans 182 residues: Large ribosomal subunit protein uL5 (182 aa).

In terms of assembly, part of the 50S ribosomal subunit; part of the 5S rRNA/uL5/uL18/bL25 (TL7) subcomplex; has also been isolated as a complex with 5S rRNA, bL25 (TL7) and DNA binding protein II. Forms a bridge to the 30S subunit in the 70S ribosome, contacting protein uS13; this bridge is straddled by the 5S rRNA. Contacts the P site tRNA.

In terms of biological role, this is one of the proteins that bind and probably mediate the attachment of the 5S RNA into the large ribosomal subunit, where it forms part of the central protuberance. In the 70S ribosome it contacts protein S13 of the 30S subunit (forming bridge B1b) connecting the head of the 30S subunit to the top of the 50S subunit. The bridge itself contacts the P site tRNA and is implicated in movement during ribosome translocation. Also contacts the P site tRNA independently of the intersubunit bridge; the 5S rRNA and some of its associated proteins might help stabilize positioning of ribosome-bound tRNAs. This Thermus thermophilus (strain ATCC 27634 / DSM 579 / HB8) protein is Large ribosomal subunit protein uL5 (rplE).